The following is a 205-amino-acid chain: Ribosome maturation factor RimP (205 aa).

A compositionally biased stretch (polar residues) spans 1–12; it reads MSNAEAQASSDH. Disordered stretches follow at residues 1-24 and 186-205; these read MSNAEAQASSDHTAPGKADTAPAH and FSHLSEDGLEPEHNGPSEEA.

Belongs to the RimP family.

The protein localises to the cytoplasm. Its function is as follows. Required for maturation of 30S ribosomal subunits. This chain is Ribosome maturation factor RimP, found in Pseudarthrobacter chlorophenolicus (strain ATCC 700700 / DSM 12829 / CIP 107037 / JCM 12360 / KCTC 9906 / NCIMB 13794 / A6) (Arthrobacter chlorophenolicus).